The chain runs to 548 residues: Peptide chain release factor 3 (548 aa).

The 268-residue stretch at 23 to 290 (ERRRTFGIIS…ALLDWAPPPQ (268 aa)) folds into the tr-type G domain. GTP-binding positions include 32-39 (SHPDAGKT), 100-104 (DTPGH), and 154-157 (NKMD).

This sequence belongs to the TRAFAC class translation factor GTPase superfamily. Classic translation factor GTPase family. PrfC subfamily.

It is found in the cytoplasm. Increases the formation of ribosomal termination complexes and stimulates activities of RF-1 and RF-2. It binds guanine nucleotides and has strong preference for UGA stop codons. It may interact directly with the ribosome. The stimulation of RF-1 and RF-2 is significantly reduced by GTP and GDP, but not by GMP. The sequence is that of Peptide chain release factor 3 from Aromatoleum aromaticum (strain DSM 19018 / LMG 30748 / EbN1) (Azoarcus sp. (strain EbN1)).